The following is a 256-amino-acid chain: Probable septum site-determining protein MinC (256 aa).

Positions 105–143 (RRGATAKPEPADEAEPPVAAAAAEAVPEPAPELAPSAPT) are disordered. The span at 120–142 (PPVAAAAAEAVPEPAPELAPSAP) shows a compositional bias: low complexity.

The protein belongs to the MinC family. As to quaternary structure, interacts with MinD and FtsZ.

Functionally, cell division inhibitor that blocks the formation of polar Z ring septums. Rapidly oscillates between the poles of the cell to destabilize FtsZ filaments that have formed before they mature into polar Z rings. Prevents FtsZ polymerization. This Burkholderia vietnamiensis (strain G4 / LMG 22486) (Burkholderia cepacia (strain R1808)) protein is Probable septum site-determining protein MinC.